Consider the following 334-residue polypeptide: L-lactate dehydrogenase B chain (334 aa).

Ala-2 is modified (N-acetylalanine). An N6-acetyllysine modification is found at Lys-7. NAD(+) is bound by residues 30–58 (GQVG…LEDK) and Arg-100. Ser-44 is subject to Phosphoserine. Lys-58 is subject to N6-acetyllysine. Arg-107 contributes to the substrate binding site. Lys-119 is subject to N6-acetyllysine. Position 139 (Asn-139) interacts with NAD(+). Substrate contacts are provided by Asn-139 and Arg-170. Residue His-194 is the Proton acceptor of the active site. The residue at position 240 (Tyr-240) is a Phosphotyrosine. Thr-249 contributes to the substrate binding site. An N6-acetyllysine modification is found at Lys-329.

The protein belongs to the LDH/MDH superfamily. LDH family. As to quaternary structure, homotetramer. Interacts with PTEN upstream reading frame protein MP31; the interaction leads to inhibition of mitochondrial lactate dehydrogenase activity, preventing conversion of lactate to pyruvate in mitochondria.

It localises to the cytoplasm. Its subcellular location is the mitochondrion inner membrane. The catalysed reaction is (S)-lactate + NAD(+) = pyruvate + NADH + H(+). It functions in the pathway fermentation; pyruvate fermentation to lactate; (S)-lactate from pyruvate: step 1/1. Functionally, interconverts simultaneously and stereospecifically pyruvate and lactate with concomitant interconversion of NADH and NAD(+). The sequence is that of L-lactate dehydrogenase B chain (LDHB) from Sus scrofa (Pig).